The primary structure comprises 485 residues: MAAHDLTQAICQNLDPHLILPLLDHCVDLDIYNEADLKRAKMQVLSRTRLIEQALELADATEKKDLDARMRSISEEEKTWEKQLEPVFEMFENDEVLSIIEATKNKDSLLSELEPYGFTENTADLLYHGSKFYFDRGQYDLAHGLLYNYRAVSTDDKLKFTALWGKLAAAILSGNWQTAQEDMYLLLEYIDGGKNELTAVEQLQQRNWLLHWSLFVFFNQPDGPDGIVDLFMNKETCTNAMQTIAPHLFRYATAVAIMSRRKKRDVMWEFVGIARQDKDLGDDPVVGFLVSLIKDFDFVTAEEKLQQCREVLSKDYFLAEMTDEFINTAQLYLFEVYLRVHSRVSIKNAATRLGKSEDDAEEWLVKLIRDAKLDAQIDPASGEIHITKPVTTVYQHVLDRTKNLQYRTYVIVESLHHLHPNGAFHHSNSSIPALFRRMMNEQLQGGGKSNKKGDYKKGDYKKGGDFKKGGDFKKGGDHKKRAWVK.

The region spanning 219–391 (NQPDGPDGIV…GEIHITKPVT (173 aa)) is the PCI domain. Positions 444 to 485 (QGGGKSNKKGDYKKGDYKKGGDFKKGGDFKKGGDHKKRAWVK) are disordered. Residues 451 to 475 (KKGDYKKGDYKKGGDFKKGGDFKKG) are compositionally biased toward basic and acidic residues. The segment covering 476–485 (GDHKKRAWVK) has biased composition (basic residues).

Belongs to the eIF-3 subunit E family. Component of the eukaryotic translation initiation factor 3 (eIF-3) complex.

It is found in the cytoplasm. In terms of biological role, component of the eukaryotic translation initiation factor 3 (eIF-3) complex, which is involved in protein synthesis of a specialized repertoire of mRNAs and, together with other initiation factors, stimulates binding of mRNA and methionyl-tRNAi to the 40S ribosome. The eIF-3 complex specifically targets and initiates translation of a subset of mRNAs involved in cell proliferation. The sequence is that of Eukaryotic translation initiation factor 3 subunit E from Monosiga brevicollis (Choanoflagellate).